Here is a 395-residue protein sequence, read N- to C-terminus: 1-deoxy-D-xylulose 5-phosphate reductoisomerase (395 aa).

NADPH-binding residues include threonine 10, glycine 11, serine 12, isoleucine 13, lysine 37, and asparagine 123. A 1-deoxy-D-xylulose 5-phosphate-binding site is contributed by lysine 124. NADPH is bound at residue glutamate 125. Aspartate 149 is a binding site for Mn(2+). 1-deoxy-D-xylulose 5-phosphate-binding residues include serine 150, glutamate 151, serine 185, and histidine 208. Mn(2+) is bound at residue glutamate 151. Glycine 214 contributes to the NADPH binding site. 1-deoxy-D-xylulose 5-phosphate contacts are provided by serine 221, asparagine 226, lysine 227, and glutamate 230. Glutamate 230 provides a ligand contact to Mn(2+).

Belongs to the DXR family. It depends on Mg(2+) as a cofactor. Mn(2+) is required as a cofactor.

It carries out the reaction 2-C-methyl-D-erythritol 4-phosphate + NADP(+) = 1-deoxy-D-xylulose 5-phosphate + NADPH + H(+). The protein operates within isoprenoid biosynthesis; isopentenyl diphosphate biosynthesis via DXP pathway; isopentenyl diphosphate from 1-deoxy-D-xylulose 5-phosphate: step 1/6. Catalyzes the NADPH-dependent rearrangement and reduction of 1-deoxy-D-xylulose-5-phosphate (DXP) to 2-C-methyl-D-erythritol 4-phosphate (MEP). This is 1-deoxy-D-xylulose 5-phosphate reductoisomerase from Shewanella loihica (strain ATCC BAA-1088 / PV-4).